The following is a 403-amino-acid chain: MEKGKVVLAYSGGLDTSVEIAWLKNKGYDVIACCIDVGEGKDLEAIKEKGLKVGAVESIVIDAKHEFAEEYVLPALQGHAYYENKYPLVSALSRPLIVKKLVEVAKEHGATAIAHGCTGKGNDQVRFEVGIHALVPEMKIEDPIRDLHWSREEEIEYAKENGIPVPISKKSPYSIDENLWGRANECGILEDPWQSAPADAYDRTVALEDTPDTPDVIEITFDKGVPTKLDGEELPLEELIMKLDKLAGKHGIGRIDHVENRLVGIKSREVYECPAATVLLAAHKDMEDLTHERDLAHFKPIIEQKLSELIYNGLWFSPLMDAIQAFLAETQKVVNGVVRVKLFKGNVICEGRKSPNSLYSEELATYTSADQFDQEAAAGFIKLWGLPTQVYAEVMQQNEKNNK.

9 to 17 (AYSGGLDTS) is a binding site for ATP. Residue Tyr86 participates in L-citrulline binding. Residue Gly116 participates in ATP binding. L-aspartate contacts are provided by Thr118, Asn122, and Asp123. An L-citrulline-binding site is contributed by Asn122. The L-citrulline site is built by Arg126, Ser174, Glu259, and Tyr271.

It belongs to the argininosuccinate synthase family. Type 1 subfamily. As to quaternary structure, homotetramer.

The protein localises to the cytoplasm. It carries out the reaction L-citrulline + L-aspartate + ATP = 2-(N(omega)-L-arginino)succinate + AMP + diphosphate + H(+). The protein operates within amino-acid biosynthesis; L-arginine biosynthesis; L-arginine from L-ornithine and carbamoyl phosphate: step 2/3. The sequence is that of Argininosuccinate synthase from Ligilactobacillus salivarius (strain UCC118) (Lactobacillus salivarius).